A 192-amino-acid chain; its full sequence is Lumican (192 aa).

LRR repeat units follow at residues 1-23 (LQWL…VFSK), 26-46 (QLKK…PLPK), 47-68 (SLED…DGLL), 69-90 (NLTF…AAFK), 94-114 (SLEY…GLPA), 115-136 (SLLT…YFKR), 139-162 (GLQY…SFNI), 164-185 (SLVE…NENL), and 186-192 (ENYYLEV).

This sequence belongs to the small leucine-rich proteoglycan (SLRP) family. SLRP class II subfamily. Binds to laminin. In terms of processing, sulfated on tyrosine residue(s). Post-translationally, contains keratan sulfate.

The protein localises to the secreted. It is found in the extracellular space. It localises to the extracellular matrix. This is Lumican (LUM) from Oryctolagus cuniculus (Rabbit).